The following is a 361-amino-acid chain: Eukaryotic translation initiation factor 3 subunit F (361 aa).

The interval 1–86 (MATPAVPVSA…PAPALPGPAL (86 aa)) is disordered. Alanine 2 is subject to N-acetylalanine. Composition is skewed to pro residues over residues 9–20 (SAPPATPAPVPA) and 30–40 (VPAPTPAPAAA). Residues 41 to 78 (PVPAAAPASSSDPAAAAATTAAPGQTPASAQAPAQTPA) are compositionally biased toward low complexity. Serine 50 carries the post-translational modification Phosphoserine; by CDK11; in vitro. The MPN domain maps to 96-226 (VRLHPVILAS…IKAYVSTLMG (131 aa)). Lysine 242 bears the N6-acetyllysine mark. Position 262 is a phosphoserine (serine 262).

This sequence belongs to the eIF-3 subunit F family. In terms of assembly, component of the eukaryotic translation initiation factor 3 (eIF-3) complex, which is composed of 13 subunits: EIF3A, EIF3B, EIF3C, EIF3D, EIF3E, EIF3F, EIF3G, EIF3H, EIF3I, EIF3J, EIF3K, EIF3L and EIF3M. The eIF-3 complex appears to include 3 stable modules: module A is composed of EIF3A, EIF3B, EIF3G and EIF3I; module B is composed of EIF3F, EIF3H, and EIF3M; and module C is composed of EIF3C, EIF3D, EIF3E, EIF3K and EIF3L. EIF3C of module C binds EIF3B of module A and EIF3H of module B, thereby linking the three modules. EIF3J is a labile subunit that binds to the eIF-3 complex via EIF3B. The eIF-3 complex interacts with RPS6KB1 under conditions of nutrient depletion. Mitogenic stimulation leads to binding and activation of a complex composed of MTOR and RPTOR, leading to phosphorylation and release of RPS6KB1 and binding of EIF4B to eIF-3. Interacts with RNF139; the interaction leads to protein translation inhibitions in a ubiquitination-dependent manner. Interacts with DTX1, the interaction is required for deubiquitinating activity towards NOTCH1. In terms of processing, phosphorylation is enhanced upon serum stimulation. Phosphorylated during apoptosis by caspase-processed CDK11.

Its subcellular location is the cytoplasm. It carries out the reaction Thiol-dependent hydrolysis of ester, thioester, amide, peptide and isopeptide bonds formed by the C-terminal Gly of ubiquitin (a 76-residue protein attached to proteins as an intracellular targeting signal).. Its function is as follows. Component of the eukaryotic translation initiation factor 3 (eIF-3) complex, which is required for several steps in the initiation of protein synthesis. The eIF-3 complex associates with the 40S ribosome and facilitates the recruitment of eIF-1, eIF-1A, eIF-2:GTP:methionyl-tRNAi and eIF-5 to form the 43S pre-initiation complex (43S PIC). The eIF-3 complex stimulates mRNA recruitment to the 43S PIC and scanning of the mRNA for AUG recognition. The eIF-3 complex is also required for disassembly and recycling of post-termination ribosomal complexes and subsequently prevents premature joining of the 40S and 60S ribosomal subunits prior to initiation. The eIF-3 complex specifically targets and initiates translation of a subset of mRNAs involved in cell proliferation, including cell cycling, differentiation and apoptosis, and uses different modes of RNA stem-loop binding to exert either translational activation or repression. Deubiquitinates activated NOTCH1, promoting its nuclear import, thereby acting as a positive regulator of Notch signaling. The protein is Eukaryotic translation initiation factor 3 subunit F of Pan troglodytes (Chimpanzee).